The primary structure comprises 599 residues: Sulfite reductase [NADPH] flavoprotein alpha-component (599 aa).

A Flavodoxin-like domain is found at 64 to 202 (VTLISASQTG…AASEWRARVV (139 aa)). FMN contacts are provided by residues 70–75 (SQTGNA), 117–120 (STQG), and 153–162 (LGDTSYEFFC). Residues 234–448 (DAPLTATLSV…IEHNDNFRLP (215 aa)) enclose the FAD-binding FR-type domain. Residues Thr-322, Ala-356, 386–389 (RLYS), 404–406 (TVG), Tyr-410, and 419–422 (GGAS) each bind FAD. NADP(+) contacts are provided by residues 519–520 (SR), 525–529 (KIYVQ), and Asp-561. Tyr-599 contributes to the FAD binding site.

It belongs to the NADPH-dependent sulphite reductase flavoprotein subunit CysJ family. This sequence in the N-terminal section; belongs to the flavodoxin family. In the C-terminal section; belongs to the flavoprotein pyridine nucleotide cytochrome reductase family. Alpha(8)-beta(8). The alpha component is a flavoprotein, the beta component is a hemoprotein. Requires FAD as cofactor. FMN is required as a cofactor.

The enzyme catalyses hydrogen sulfide + 3 NADP(+) + 3 H2O = sulfite + 3 NADPH + 4 H(+). Its pathway is sulfur metabolism; hydrogen sulfide biosynthesis; hydrogen sulfide from sulfite (NADPH route): step 1/1. Component of the sulfite reductase complex that catalyzes the 6-electron reduction of sulfite to sulfide. This is one of several activities required for the biosynthesis of L-cysteine from sulfate. The flavoprotein component catalyzes the electron flow from NADPH -&gt; FAD -&gt; FMN to the hemoprotein component. The sequence is that of Sulfite reductase [NADPH] flavoprotein alpha-component from Salmonella paratyphi A (strain ATCC 9150 / SARB42).